The sequence spans 443 residues: L-ornithine N(5)-monooxygenase (443 aa).

FAD contacts are provided by residues 45 to 53 and Gln-64; that span reads DKQGDYRWH. Lys-69 is a substrate binding site. Val-130 is an FAD binding site. NADP(+)-binding positions include 215–218 and Arg-240; that span reads GGQS. Substrate-binding positions include 254 to 257 and Asn-284; that span reads NEVF. 284–286 lines the NADP(+) pocket; sequence NYS. 407–409 contacts FAD; sequence TLL. Substrate is bound at residue Ser-410.

The protein belongs to the lysine N(6)-hydroxylase/L-ornithine N(5)-oxygenase family. Homotetramer. FAD serves as cofactor.

The protein localises to the cell inner membrane. The catalysed reaction is L-ornithine + NADPH + O2 = N(5)-hydroxy-L-ornithine + NADP(+) + H2O. The protein operates within siderophore biosynthesis; pyoverdin biosynthesis. Functionally, catalyzes the conversion of L-ornithine to N(5)-hydroxyornithine, the first step in the biosynthesis of all hydroxamate-containing siderophores, such as pyoverdin. Pyoverdin is a hydroxamate siderophore composed of a 6,7-dihydroxyquinoline-containing fluorescent chromophore joined to the N-terminus of a partly cyclic octapeptide (D-Ser-L-Arg-D-Ser-L-N(5)-OH-Orn-L-Lys-L-N(5)-OH-Orn-L-Thr-L-Thr in strain PAO1). Specific for NADPH, which plays a role in stabilization of the C4a-hydroperoxyflavin intermediate. The polypeptide is L-ornithine N(5)-monooxygenase (Pseudomonas aeruginosa (strain ATCC 15692 / DSM 22644 / CIP 104116 / JCM 14847 / LMG 12228 / 1C / PRS 101 / PAO1)).